The primary structure comprises 292 residues: Medium chain reductase/dehydrogenase ucsI (292 aa).

A Zn(2+)-binding site is contributed by Cys43. Tyr49 provides a ligand contact to substrate. Positions 65 and 66 each coordinate Zn(2+). NAD(+) is bound by residues Gly184–Gly189, Asp208, Arg213, and Ile276–Ala278.

Belongs to the zinc-containing alcohol dehydrogenase family. Requires Zn(2+) as cofactor.

It functions in the pathway mycotoxin biosynthesis. Its function is as follows. Medium chain reductase/dehydrogenase; part of the gene cluster that mediates the biosynthesis of UCS1025A, a member of the pyrrolizidinone family that acts as a strong telomerase inhibitor and displays potent antibacterial and antitumor properties. These compounds share a hemiaminal-containing pyrrolizidinone core fused with a gamma-lactone, giving a furopyrrolizidine that is connected to a decalin fragment. The polyketide synthase module (PKS) of the PKS-NRPS ucsA is responsible for the synthesis of the polyketide backbone via the condensation of an acetyl-CoA starter unit with 6 malonyl-CoA units. The downstream nonribosomal peptide synthetase (NRPS) module then amidates the carboxyl end of the polyketide with a 2S,3S-methylproline derived from L-isoleucine by the 2-oxoglutarate-dependent dioxygenase ucsF which converts L-isoleucine to (4S,5S)-4-methylpyrroline-5-carboxylate that is further converted to 2S,3S-methylproline by the pyrroline-5-carboxylate reductase ucsG. Reductive release of the completed aminoacyl polyketide from the assembly line can form the 3-pyrrolin-2-one structure via an intramolecular Knoevenagel reaction. Because ucsA lacks a designated enoylreductase (ER) domain, the required activity is provided the enoyl reductase ucsL. This keto acyclic precursor is the substrate of the Diels-Alderase ucsH, that catalyzes the Diels-Alder cycloaddition. Oxidation of the 3S-methyl group to a carboxylate by the cytochrome P450 monooxygenase ucsK allows an oxa-Michael cyclization that might involve the reductase/dehydrogenase ucsI and which furnishes the furopyrrolizidine. The oxidase ucsJ likely plays a critical role in stereoselective reduction of the C5-C6 double bond to afford the required R-configured carboxylate group. Further enolization and oxidation at C5 by an unidentified enzyme affords the last intermediate that can undergo oxa-Michael cyclization to yield UCS1025A. The chain is Medium chain reductase/dehydrogenase ucsI from Acremonium sp.